A 138-amino-acid polypeptide reads, in one-letter code: Endoribonuclease YbeY (138 aa).

Zn(2+) is bound by residues H105, H109, and D115.

It belongs to the endoribonuclease YbeY family. The cofactor is Zn(2+).

The protein resides in the cytoplasm. Its function is as follows. Single strand-specific metallo-endoribonuclease involved in late-stage 70S ribosome quality control and in maturation of the 3' terminus of the 16S rRNA. This is Endoribonuclease YbeY from Chlorobium phaeobacteroides (strain BS1).